The following is a 304-amino-acid chain: GTPase Era (304 aa).

The 169-residue stretch at 9 to 177 folds into the Era-type G domain; that stretch reads HSGFVAIVGR…VTTLSQHMPE (169 aa). The segment at 17–24 is G1; it reads GRPNVGKS. 17-24 contacts GTP; that stretch reads GRPNVGKS. Positions 43–47 are G2; that stretch reads QTTRN. The tract at residues 64–67 is G3; it reads DTPG. GTP-binding positions include 64-68 and 127-130; these read DTPGI and NKID. Residues 127–130 form a G4 region; the sequence is NKID. Residues 156–158 are G5; it reads ISA. The 78-residue stretch at 208 to 285 folds into the KH type-2 domain; sequence TRQEVPHSVA…YLELWVKVSE (78 aa).

Belongs to the TRAFAC class TrmE-Era-EngA-EngB-Septin-like GTPase superfamily. Era GTPase family. In terms of assembly, monomer.

The protein resides in the cytoplasm. It localises to the cell membrane. An essential GTPase that binds both GDP and GTP, with rapid nucleotide exchange. Plays a role in 16S rRNA processing and 30S ribosomal subunit biogenesis and possibly also in cell cycle regulation and energy metabolism. The sequence is that of GTPase Era from Pediococcus pentosaceus (strain ATCC 25745 / CCUG 21536 / LMG 10740 / 183-1w).